The following is a 298-amino-acid chain: Cyclic dof factor 1 (298 aa).

The interval 27 to 46 (EEEEKNQNKTLTDQSEKDKT) is disordered. The Dof-type zinc-finger motif lies at 54 to 108 (LPCPRCNSMETKFCYYNNYNVNQPRHFCKACQRYWTSGGTMRSVPIGAGRRKNKN). Residues C56, C59, C81, and C84 each contribute to the Zn(2+) site. The interval 200–231 (SSSPTSTLGKHSRDEDETVKQKQRNGSVLVPK) is disordered. Positions 210 to 219 (HSRDEDETVK) are enriched in basic and acidic residues.

In terms of assembly, interacts with ADO2 (via kelch repeats), ADO3 (via kelch repeats) and GI (via N-terminus). Ubiquitinated. As to expression, expressed in the vascular tissues of cotyledons, leaves and hypocotyls and in stomata. Not detected in roots.

It localises to the nucleus. In terms of biological role, transcription factor that binds specifically to a 5'-AA[AG]G-3' consensus core sequence. A flanking TGT sequence contributes to the specificity of binding. Regulates a photoperiodic flowering response. Transcriptional repressor of 'CONSTANS' expression. The DNA-binding ability is not modulated by 'GIGANTEA' but the stability of CDF1 is controlled by the proteasome-dependent pathway. Ubiquitinated by the SCF(ADO3) E3 ubiquitin ligase complex. Binds to the FT promoter in the morning. This is Cyclic dof factor 1 (CDF1) from Arabidopsis thaliana (Mouse-ear cress).